The following is a 446-amino-acid chain: BAG family molecular chaperone regulator 7 (446 aa).

The segment at 230-252 (TGGEKKKKHEEKEKKEKIETKSK) is disordered. A compositionally biased stretch (basic and acidic residues) spans 239–250 (EEKEKKEKIETK). The 30-residue stretch at 303-332 (PEYAAVMIQRAFKAYLIRRSKSLRALRDLA) folds into the IQ domain. The BAG domain maps to 330 to 407 (DLAIAKTKLK…AMLDVVDPQP (78 aa)). A Phosphothreonine modification is found at threonine 443.

As to quaternary structure, binds to the ATPase domain of HSP70/HSC70 chaperones. Interacts with HSP70-11/BIP2.

The protein resides in the endoplasmic reticulum. Co-chaperone that regulates diverse cellular pathways, such as programmed cell death and stress responses. Necessary for the proper maintenance of the unfolded protein response (UPR) during heat and cold tolerance. The sequence is that of BAG family molecular chaperone regulator 7 (BAG7) from Arabidopsis thaliana (Mouse-ear cress).